The chain runs to 79 residues: U16-theraphotoxin-Cg1a (79 aa).

The first 19 residues, 1–19 (MRALLIIAGLALFLVVCNA), serve as a signal peptide directing secretion. Positions 20–44 (SQVNEQRKLNEMLSVMFAVEEPQER) are excised as a propeptide. Disulfide bonds link Cys47-Cys62, Cys54-Cys67, and Cys61-Cys74.

This sequence belongs to the neurotoxin 10 (Hwtx-1) family. 34 (Jztx-26) subfamily. As to expression, expressed by the venom gland.

The protein resides in the secreted. Probable ion channel inhibitor. The chain is U16-theraphotoxin-Cg1a from Chilobrachys guangxiensis (Chinese earth tiger tarantula).